The chain runs to 200 residues: Putative 3-methyladenine DNA glycosylase (200 aa).

This sequence belongs to the DNA glycosylase MPG family.

In Bradyrhizobium diazoefficiens (strain JCM 10833 / BCRC 13528 / IAM 13628 / NBRC 14792 / USDA 110), this protein is Putative 3-methyladenine DNA glycosylase.